The primary structure comprises 1382 residues: Hepatocyte growth factor receptor (1382 aa).

An N-terminal signal peptide occupies residues 1–24 (MKAPAVLAPGILVLLFTLVQKSYG). Over 25–935 (ECKEALVKSE…VQPDQNFTGL (911 aa)) the chain is Extracellular. Residues 27-516 (KEALVKSEMN…TGKKITRIPL (490 aa)) enclose the Sema domain. N-linked (GlcNAc...) asparagine glycosylation occurs at asparagine 45. 4 disulfides stabilise this stretch: cysteine 95-cysteine 101, cysteine 98-cysteine 160, cysteine 133-cysteine 141, and cysteine 173-cysteine 176. Asparagine 106 is a glycosylation site (N-linked (GlcNAc...) asparagine). N-linked (GlcNAc...) asparagine glycans are attached at residues asparagine 203 and asparagine 359. 2 cysteine pairs are disulfide-bonded: cysteine 299/cysteine 364 and cysteine 386/cysteine 398. 2 N-linked (GlcNAc...) asparagine glycosylation sites follow: asparagine 400 and asparagine 406. 4 disulfides stabilise this stretch: cysteine 521–cysteine 539, cysteine 527–cysteine 562, cysteine 530–cysteine 546, and cysteine 542–cysteine 552. IPT/TIG domains lie at 564–656 (PAIY…FSYV), 658–740 (PIIT…FSYQ), and 743–837 (PIVY…LIYV). Threonine 583 carries O-linked (Man) threonine glycosylation. Residues asparagine 608 and asparagine 636 are each glycosylated (N-linked (GlcNAc...) asparagine). 2 O-linked (Man) threonine glycosylation sites follow: threonine 677 and threonine 762. 3 N-linked (GlcNAc...) asparagine glycosylation sites follow: asparagine 786, asparagine 880, and asparagine 931. The chain crosses the membrane as a helical span at residues 936 to 956 (IAGVISISTIVLLLLGLFLWL). Topologically, residues 957–1379 (KRKKQIKDLG…LSSQDNIDGE (423 aa)) are cytoplasmic. Serine 967 bears the Phosphoserine mark. Position 978 is a phosphothreonine (threonine 978). 3 positions are modified to phosphoserine: serine 991, serine 998, and serine 1001. Position 1004 is a phosphotyrosine (tyrosine 1004). The 268-residue stretch at 1079-1346 (VHFNEVIGRG…RISAIFSTFI (268 aa)) folds into the Protein kinase domain. ATP-binding positions include 1085 to 1093 (IGRGHFGCV) and lysine 1111. Aspartate 1205 acts as the Proton acceptor in catalysis. Residues 1213–1382 (LDEKFTVKVA…QDNIDGEGDT (170 aa)) form an interaction with RANBP9 region. Phosphotyrosine is present on tyrosine 1231. Tyrosine 1235 and tyrosine 1236 each carry phosphotyrosine; by autocatalysis. Threonine 1290 is subject to Phosphothreonine. The segment at 1321 to 1360 (WHPRAELRPSFSELVSRISAIFSTFIGEHYVHVNATYVNV) is interaction with MUC20. A phosphotyrosine; by autocatalysis mark is found at tyrosine 1350 and tyrosine 1357. Phosphotyrosine is present on tyrosine 1366.

Belongs to the protein kinase superfamily. Tyr protein kinase family. In terms of assembly, heterodimer made of an alpha chain (50 kDa) and a beta chain (145 kDa) which are disulfide linked. Binds PLXNB1. Interacts when phosphorylated with downstream effectors including STAT3, PIK3R1, SRC, PCLG1, GRB2 and GAB1. Interacts with SPSB1, SPSB2 and SPSB4. Interacts with INPP5D/SHIP1. When phosphorylated at Tyr-1357, interacts with INPPL1/SHIP2. Interacts with RANBP9 and RANBP10, as well as SPSB1, SPSB2, SPSB3 and SPSB4. SPSB1 binding occurs in the presence and in the absence of HGF, however HGF treatment has a positive effect on this interaction. Interacts with MUC20; prevents interaction with GRB2 and suppresses hepatocyte growth factor-induced cell proliferation. Interacts with GRB10. Interacts with PTPN1 and PTPN2. Interacts with HSP90AA1 and HSP90AB1; the interaction suppresses MET kinase activity. Interacts with tensin TNS3. Interacts (when phosphorylated) with tensin TNS4 (via SH2 domain); the interaction increases MET protein stability by inhibiting MET endocytosis and subsequent lysosomal degradation. (Microbial infection) Interacts with L.monocytogenes InlB. InlB probably dimerizes upon binding to MET, which encourages subsequent dimerization of MET. In terms of processing, autophosphorylated in response to ligand binding on Tyr-1235 and Tyr-1236 in the kinase domain leading to further phosphorylation of Tyr-1350 and Tyr-1357 in the C-terminal multifunctional docking site. Dephosphorylated by PTPRJ at Tyr-1350 and Tyr-1366. Dephosphorylated by PTPN1 and PTPN2. Post-translationally, ubiquitinated. Ubiquitination by CBL regulates the receptor stability and activity through proteasomal degradation. (Microbial infection) Tyrosine phosphorylation is stimulated by L.monocytogenes InlB. In terms of processing, O-mannosylation of IPT/TIG domains by TMEM260 is required for protein maturation. O-mannosylated residues are composed of single mannose glycans that are not elongated or modified.

It is found in the membrane. The enzyme catalyses L-tyrosyl-[protein] + ATP = O-phospho-L-tyrosyl-[protein] + ADP + H(+). With respect to regulation, in its inactive state, the C-terminal tail interacts with the catalytic domain and inhibits the kinase activity. Upon ligand binding, the C-terminal tail is displaced and becomes phosphorylated, thus increasing the kinase activity. In terms of biological role, receptor tyrosine kinase that transduces signals from the extracellular matrix into the cytoplasm by binding to hepatocyte growth factor/HGF ligand. Regulates many physiological processes including proliferation, scattering, morphogenesis and survival. Ligand binding at the cell surface induces autophosphorylation of MET on its intracellular domain that provides docking sites for downstream signaling molecules. Following activation by ligand, interacts with the PI3-kinase subunit PIK3R1, PLCG1, SRC, GRB2, STAT3 or the adapter GAB1. Recruitment of these downstream effectors by MET leads to the activation of several signaling cascades including the RAS-ERK, PI3 kinase-AKT, or PLCgamma-PKC. The RAS-ERK activation is associated with the morphogenetic effects while PI3K/AKT coordinates prosurvival effects. During embryonic development, MET signaling plays a role in gastrulation, development and migration of muscles and neuronal precursors, angiogenesis and kidney formation. In adults, participates in wound healing as well as organ regeneration and tissue remodeling. Also promotes differentiation and proliferation of hematopoietic cells. (Microbial infection) Acts as a receptor for Listeria monocytogenes internalin InlB, mediating entry of the pathogen into cells. The polypeptide is Hepatocyte growth factor receptor (MET) (Canis lupus familiaris (Dog)).